A 215-amino-acid polypeptide reads, in one-letter code: Pyrrolidone-carboxylate peptidase (215 aa).

Catalysis depends on residues glutamate 80, cysteine 143, and histidine 167.

This sequence belongs to the peptidase C15 family. In terms of assembly, homotetramer.

Its subcellular location is the cytoplasm. The enzyme catalyses Release of an N-terminal pyroglutamyl group from a polypeptide, the second amino acid generally not being Pro.. In terms of biological role, removes 5-oxoproline from various penultimate amino acid residues except L-proline. The polypeptide is Pyrrolidone-carboxylate peptidase (Bacillus cereus (strain B4264)).